The primary structure comprises 248 residues: Large ribosomal subunit protein uL30 (248 aa).

Methionine 1 is modified (N-acetylmethionine). Repeat copies occupy residues 7 to 18 (KKKEVPAVPETL), 19 to 30 (KKKRRNFAELKI), 31 to 42 (KRLRKKFAQKML), and 43 to 54 (RKARRKLIYEKA). The segment at 7–54 (KKKEVPAVPETLKKKRRNFAELKIKRLRKKFAQKMLRKARRKLIYEKA) is 4 X 12 AA tandem repeats. At threonine 17 the chain carries Phosphothreonine. N6-acetyllysine is present on lysine 124. Lysine 127 is subject to N6-succinyllysine. At tyrosine 139 the chain carries Phosphotyrosine.

Belongs to the universal ribosomal protein uL30 family. As to quaternary structure, component of the large ribosomal subunit. Homodimer. Interacts with DHX33.

It localises to the cytoplasm. In terms of biological role, component of the large ribosomal subunit. The ribosome is a large ribonucleoprotein complex responsible for the synthesis of proteins in the cell. Binds to G-rich structures in 28S rRNA and in mRNAs. Plays a regulatory role in the translation apparatus; inhibits cell-free translation of mRNAs. This Homo sapiens (Human) protein is Large ribosomal subunit protein uL30 (RPL7).